A 78-amino-acid chain; its full sequence is Large ribosomal subunit protein bL28 (78 aa).

It belongs to the bacterial ribosomal protein bL28 family.

The protein is Large ribosomal subunit protein bL28 of Hydrogenovibrio crunogenus (strain DSM 25203 / XCL-2) (Thiomicrospira crunogena).